A 238-amino-acid chain; its full sequence is Deoxyribose-phosphate aldolase (238 aa).

Catalysis depends on Asp-102, which acts as the Proton donor/acceptor. Residue Lys-164 is the Schiff-base intermediate with acetaldehyde of the active site. Lys-193 functions as the Proton donor/acceptor in the catalytic mechanism.

This sequence belongs to the DeoC/FbaB aldolase family. DeoC type 1 subfamily.

The protein localises to the cytoplasm. It catalyses the reaction 2-deoxy-D-ribose 5-phosphate = D-glyceraldehyde 3-phosphate + acetaldehyde. The protein operates within carbohydrate degradation; 2-deoxy-D-ribose 1-phosphate degradation; D-glyceraldehyde 3-phosphate and acetaldehyde from 2-deoxy-alpha-D-ribose 1-phosphate: step 2/2. Catalyzes a reversible aldol reaction between acetaldehyde and D-glyceraldehyde 3-phosphate to generate 2-deoxy-D-ribose 5-phosphate. The chain is Deoxyribose-phosphate aldolase from Rhodospirillum rubrum (strain ATCC 11170 / ATH 1.1.1 / DSM 467 / LMG 4362 / NCIMB 8255 / S1).